The sequence spans 430 residues: Serine--tRNA ligase (430 aa).

237–239 (TAE) contributes to the L-serine binding site. 268–270 (RSE) lines the ATP pocket. Glu-291 contributes to the L-serine binding site. ATP is bound at residue 355–358 (EISS). L-serine is bound at residue Ser-391.

The protein belongs to the class-II aminoacyl-tRNA synthetase family. Type-1 seryl-tRNA synthetase subfamily. Homodimer. The tRNA molecule binds across the dimer.

The protein localises to the cytoplasm. The catalysed reaction is tRNA(Ser) + L-serine + ATP = L-seryl-tRNA(Ser) + AMP + diphosphate + H(+). It catalyses the reaction tRNA(Sec) + L-serine + ATP = L-seryl-tRNA(Sec) + AMP + diphosphate + H(+). It functions in the pathway aminoacyl-tRNA biosynthesis; selenocysteinyl-tRNA(Sec) biosynthesis; L-seryl-tRNA(Sec) from L-serine and tRNA(Sec): step 1/1. Its function is as follows. Catalyzes the attachment of serine to tRNA(Ser). Is also able to aminoacylate tRNA(Sec) with serine, to form the misacylated tRNA L-seryl-tRNA(Sec), which will be further converted into selenocysteinyl-tRNA(Sec). In Salmonella paratyphi C (strain RKS4594), this protein is Serine--tRNA ligase.